A 122-amino-acid chain; its full sequence is Protein FAM223A (122 aa).

Belongs to the FAM223 family.

In Homo sapiens (Human), this protein is Protein FAM223A (FAM223A).